We begin with the raw amino-acid sequence, 122 residues long: uncharacterized protein (122 aa).

2 helical membrane-spanning segments follow: residues 34–54 and 91–111; these read IIFL…GVLV and FVLA…FVSF.

The protein resides in the cell membrane. This is an uncharacterized protein from Mycoplasma pneumoniae (strain ATCC 29342 / M129 / Subtype 1) (Mycoplasmoides pneumoniae).